The primary structure comprises 329 residues: GTP 3',8-cyclase (329 aa).

The region spanning 8–234 is the Radical SAM core domain; sequence AFARKFYYLR…QLRSRADGPA (227 aa). R17 is a binding site for GTP. [4Fe-4S] cluster-binding residues include C24 and C28. Y30 contacts S-adenosyl-L-methionine. C31 contacts [4Fe-4S] cluster. R68 is a binding site for GTP. Residue G72 participates in S-adenosyl-L-methionine binding. T99 is a binding site for GTP. S123 is an S-adenosyl-L-methionine binding site. K160 serves as a coordination point for GTP. M194 contacts S-adenosyl-L-methionine. Positions 257 and 260 each coordinate [4Fe-4S] cluster. Residue 262 to 264 participates in GTP binding; the sequence is RLR. C274 provides a ligand contact to [4Fe-4S] cluster.

Belongs to the radical SAM superfamily. MoaA family. In terms of assembly, monomer and homodimer. [4Fe-4S] cluster is required as a cofactor.

The enzyme catalyses GTP + AH2 + S-adenosyl-L-methionine = (8S)-3',8-cyclo-7,8-dihydroguanosine 5'-triphosphate + 5'-deoxyadenosine + L-methionine + A + H(+). The protein operates within cofactor biosynthesis; molybdopterin biosynthesis. In terms of biological role, catalyzes the cyclization of GTP to (8S)-3',8-cyclo-7,8-dihydroguanosine 5'-triphosphate. In Cronobacter sakazakii (strain ATCC BAA-894) (Enterobacter sakazakii), this protein is GTP 3',8-cyclase.